A 392-amino-acid polypeptide reads, in one-letter code: Alanine--glyoxylate aminotransferase (392 aa).

Position 209 is an N6-(pyridoxal phosphate)lysine (Lys-209). Residue Lys-225 is modified to N6-acetyllysine; alternate. Lys-225 is modified (N6-succinyllysine; alternate). N6-acetyllysine is present on residues Lys-234 and Lys-312. Arg-360 contributes to the substrate binding site. The Microbody targeting signal motif lies at 390-392 (KKL).

The protein belongs to the class-V pyridoxal-phosphate-dependent aminotransferase family. As to quaternary structure, homodimer. Pyridoxal 5'-phosphate serves as cofactor.

The protein localises to the peroxisome. The enzyme catalyses L-serine + pyruvate = 3-hydroxypyruvate + L-alanine. It catalyses the reaction glyoxylate + L-alanine = glycine + pyruvate. Functionally, peroxisomal aminotransferase that catalyzes the transamination of glyoxylate to glycine and contributes to the glyoxylate detoxification. Also catalyzes the transamination between L-serine and pyruvate and contributes to gluconeogenesis from the L-serine metabolism. The protein is Alanine--glyoxylate aminotransferase of Pongo abelii (Sumatran orangutan).